The following is a 594-amino-acid chain: DNA ligase 2 (594 aa).

Glu-250 is a binding site for ATP. The N6-AMP-lysine intermediate role is filled by Lys-252. Positions 257, 273, 303, 343, 419, and 425 each coordinate ATP.

The protein belongs to the ATP-dependent DNA ligase family. Mg(2+) serves as cofactor.

It carries out the reaction ATP + (deoxyribonucleotide)n-3'-hydroxyl + 5'-phospho-(deoxyribonucleotide)m = (deoxyribonucleotide)n+m + AMP + diphosphate.. DNA ligase that seals nicks in double-stranded DNA during DNA replication, DNA recombination and DNA repair. This chain is DNA ligase 2, found in Korarchaeum cryptofilum (strain OPF8).